The following is a 178-amino-acid chain: MSEKAIAVKAQKVEEIADQFKAAASAVVVDPRGLTVAQSTELRHQLREEGVVLEVIKNKVLTRAAEKAGYAELNDIFAGPSAVAFSNDDAVAPARILKKFADENEALEIKGGVVDGTIANIDDINKYASLPSREGLLGQLMAEFQFSIRSFAYAVKAVQDKLEEESAAPAAEASTDAE.

Belongs to the universal ribosomal protein uL10 family. As to quaternary structure, part of the ribosomal stalk of the 50S ribosomal subunit. The N-terminus interacts with L11 and the large rRNA to form the base of the stalk. The C-terminus forms an elongated spine to which L12 dimers bind in a sequential fashion forming a multimeric L10(L12)X complex.

Functionally, forms part of the ribosomal stalk, playing a central role in the interaction of the ribosome with GTP-bound translation factors. In Leuconostoc mesenteroides subsp. mesenteroides (strain ATCC 8293 / DSM 20343 / BCRC 11652 / CCM 1803 / JCM 6124 / NCDO 523 / NBRC 100496 / NCIMB 8023 / NCTC 12954 / NRRL B-1118 / 37Y), this protein is Large ribosomal subunit protein uL10.